A 230-amino-acid polypeptide reads, in one-letter code: Sugar fermentation stimulation protein homolog (230 aa).

It belongs to the SfsA family.

The chain is Sugar fermentation stimulation protein homolog from Clostridium botulinum (strain 657 / Type Ba4).